The following is a 932-amino-acid chain: Alanine--tRNA ligase, mitochondrial (932 aa).

Residues 458–480 form a disordered region; sequence SRLTWNTSSSSSDQTTQQTTQLP. Residues 464-478 show a composition bias toward low complexity; that stretch reads TSSSSSDQTTQQTTQ. The Zn(2+) site is built by His-610, His-614, Cys-713, and His-717.

Belongs to the class-II aminoacyl-tRNA synthetase family. Monomer. Zn(2+) is required as a cofactor.

The protein localises to the mitochondrion. It catalyses the reaction tRNA(Ala) + L-alanine + ATP = L-alanyl-tRNA(Ala) + AMP + diphosphate. Catalyzes the attachment of alanine to tRNA(Ala) in a two-step reaction: alanine is first activated by ATP to form Ala-AMP and then transferred to the acceptor end of tRNA(Ala). Also edits incorrectly charged tRNA(Ala) via its editing domain. This Dictyostelium discoideum (Social amoeba) protein is Alanine--tRNA ligase, mitochondrial (malaS).